Here is a 364-residue protein sequence, read N- to C-terminus: Fructose-1,6-bisphosphatase class 1 2 (364 aa).

Mg(2+) is bound by residues E101, D123, L125, and D126. Residues 126-129 (DGSS) and N218 contribute to the substrate site. E290 serves as a coordination point for Mg(2+).

Belongs to the FBPase class 1 family. Homotetramer. Requires Mg(2+) as cofactor.

It is found in the cytoplasm. It catalyses the reaction beta-D-fructose 1,6-bisphosphate + H2O = beta-D-fructose 6-phosphate + phosphate. Its pathway is carbohydrate biosynthesis; gluconeogenesis. The polypeptide is Fructose-1,6-bisphosphatase class 1 2 (Cupriavidus taiwanensis (strain DSM 17343 / BCRC 17206 / CCUG 44338 / CIP 107171 / LMG 19424 / R1) (Ralstonia taiwanensis (strain LMG 19424))).